A 234-amino-acid polypeptide reads, in one-letter code: Orotidine 5'-phosphate decarboxylase (234 aa).

Substrate is bound by residues aspartate 11, lysine 33, 60 to 69 (DLKFHDIPNT), threonine 120, arginine 181, glutamine 190, glycine 210, and arginine 211. Catalysis depends on lysine 62, which acts as the Proton donor.

Belongs to the OMP decarboxylase family. Type 1 subfamily. Homodimer.

It carries out the reaction orotidine 5'-phosphate + H(+) = UMP + CO2. It functions in the pathway pyrimidine metabolism; UMP biosynthesis via de novo pathway; UMP from orotate: step 2/2. Catalyzes the decarboxylation of orotidine 5'-monophosphate (OMP) to uridine 5'-monophosphate (UMP). This is Orotidine 5'-phosphate decarboxylase from Shewanella sediminis (strain HAW-EB3).